The following is a 346-amino-acid chain: Peripherin-2 (346 aa).

At 1–24 (MALLKVKFDQKKRVKLAQGLWLMN) the chain is on the cytoplasmic side. The helical transmembrane segment at 25–43 (WLSVLAGIVLFSLGLFLKI) threads the bilayer. The Lumenal portion of the chain corresponds to 44–61 (ELRKRSEVMNNSESHFVP). N53 is a glycosylation site (N-linked (GlcNAc...) asparagine). Residues 62–80 (NSLIGVGVLSCVFNSLAGK) form a helical membrane-spanning segment. The Cytoplasmic segment spans residues 81–99 (ICYDALDPAKYAKWKPWLK). The helical transmembrane segment at 100–123 (PYLAVCIFFNVILFLVALCCFLLR) threads the bilayer. At 124–264 (GSLESTLAYG…LNYYSSLMNS (141 aa)) the chain is on the lumenal side. N-linked (GlcNAc...) asparagine glycosylation occurs at N229. The helical transmembrane segment at 265–290 (MGVVTLLVWLFEVSITAGLRYLHTAL) threads the bilayer. Over 291–346 (ESVSNPEDPECESEGWLLEKSVPETWKAFLESFKKLGKSNQVEAEGADAGPAPEAG) the chain is Cytoplasmic. The segment at 341-346 (PAPEAG) is interaction with MREG.

This sequence belongs to the PRPH2/ROM1 family. Homodimer; disulfide-linked. Forms a homotetramer. Forms a heterotetramer with ROM1. Homotetramer and heterotetramer core complexes go on to form higher order complexes by formation of intermolecular disulfide bonds. Interacts with MREG. Interacts with STX3 isoform 3B. Interacts with SNAP25. In terms of tissue distribution, expressed in the retina (at protein level).

It localises to the membrane. The protein localises to the cell projection. Its subcellular location is the cilium. The protein resides in the photoreceptor outer segment. It is found in the photoreceptor inner segment. Its function is as follows. Essential for retina photoreceptor outer segment disk morphogenesis, may also play a role with ROM1 in the maintenance of outer segment disk structure. Required for the maintenance of retinal outer nuclear layer thickness. Required for the correct development and organization of the photoreceptor inner segment. In Mus musculus (Mouse), this protein is Peripherin-2 (Prph2).